Consider the following 651-residue polypeptide: Acetyl-coenzyme A synthetase (651 aa).

CoA-binding positions include 191–194, threonine 311, and asparagine 335; that span reads RGGK. ATP-binding positions include 387–389, 411–416, aspartate 500, and arginine 515; these read GEP and DTWWQT. Serine 523 is a binding site for CoA. Position 526 (arginine 526) interacts with ATP. Residues valine 537, histidine 539, and valine 542 each contribute to the Mg(2+) site. Residue arginine 584 coordinates CoA. N6-acetyllysine is present on lysine 609.

The protein belongs to the ATP-dependent AMP-binding enzyme family. It depends on Mg(2+) as a cofactor. In terms of processing, acetylated. Deacetylation by the SIR2-homolog deacetylase activates the enzyme.

It carries out the reaction acetate + ATP + CoA = acetyl-CoA + AMP + diphosphate. Functionally, catalyzes the conversion of acetate into acetyl-CoA (AcCoA), an essential intermediate at the junction of anabolic and catabolic pathways. AcsA undergoes a two-step reaction. In the first half reaction, AcsA combines acetate with ATP to form acetyl-adenylate (AcAMP) intermediate. In the second half reaction, it can then transfer the acetyl group from AcAMP to the sulfhydryl group of CoA, forming the product AcCoA. This is Acetyl-coenzyme A synthetase from Pseudomonas syringae pv. syringae (strain B728a).